The sequence spans 330 residues: Phenylalanine--tRNA ligase alpha subunit (330 aa).

Glu257 serves as a coordination point for Mg(2+).

This sequence belongs to the class-II aminoacyl-tRNA synthetase family. Phe-tRNA synthetase alpha subunit type 1 subfamily. As to quaternary structure, tetramer of two alpha and two beta subunits. The cofactor is Mg(2+).

Its subcellular location is the cytoplasm. It carries out the reaction tRNA(Phe) + L-phenylalanine + ATP = L-phenylalanyl-tRNA(Phe) + AMP + diphosphate + H(+). The sequence is that of Phenylalanine--tRNA ligase alpha subunit from Nostoc sp. (strain PCC 7120 / SAG 25.82 / UTEX 2576).